Consider the following 825-residue polypeptide: Putative NAD(+)--arginine ADP-ribosyltransferase Mav (825 aa).

The tract at residues 435–673 (ALKGLKKPPG…SGSDHHLPLH (239 aa)) is disordered. Composition is skewed to pro residues over residues 443 to 457 (PGVP…PAAP) and 468 to 491 (SGKP…PLPH). The span at 560–579 (PAADTPAPSAPAASMSAASG) shows a compositional bias: low complexity. Over residues 580 to 589 (PPMPPTPSLP) the composition is skewed to pro residues. The segment covering 590–599 (EPASLPSGPS) has biased composition (low complexity). A TR mART core domain is found at 650–825 (KNANGHGPHD…GRTIIEMIER (176 aa)). The span at 656 to 670 (GPHDASLDSGSDHHL) shows a compositional bias: basic and acidic residues. NAD(+) contacts are provided by residues 687–699 (TGPG…FALR), 730–733 (RGTN), and Glu-750. Arg-730 is an active-site residue. Catalysis depends on residues Ser-755 and Glu-795. Position 795 (Glu-795) interacts with NAD(+).

It belongs to the Arg-specific ADP-ribosyltransferase family.

Its subcellular location is the secreted. The catalysed reaction is L-arginyl-[protein] + NAD(+) = N(omega)-(ADP-D-ribosyl)-L-arginyl-[protein] + nicotinamide + H(+). In terms of biological role, a probable mono(ADP-ribosyl)transferase, it may ADP-ribosylate Arg in target protein(s). The chain is Putative NAD(+)--arginine ADP-ribosyltransferase Mav from Mycobacterium avium (strain 104).